We begin with the raw amino-acid sequence, 63 residues long: Beta-glucosidase A-3 (63 aa).

The active site involves Asp-12. 2 N-linked (GlcNAc...) asparagine glycosylation sites follow: Asn-48 and Asn-56.

Belongs to the glycosyl hydrolase 3 family.

It carries out the reaction Hydrolysis of terminal, non-reducing beta-D-glucosyl residues with release of beta-D-glucose.. It functions in the pathway glycan metabolism; cellulose degradation. The protein is Beta-glucosidase A-3 of Aspergillus wentii.